Here is a 2477-residue protein sequence, read N- to C-terminus: Non-reducing polyketide synthase mapC (2477 aa).

Positions 14-269 (LLFGPQCSEI…HQQTHREGIQ (256 aa)) are N-terminal acylcarrier protein transacylase domain (SAT). One can recognise a Ketosynthase family 3 (KS3) domain in the interval 403 to 820 (MPPIAITGMA…GSNAALIVRD (418 aa)). Catalysis depends on for beta-ketoacyl synthase activity residues Cys568, His703, and His742. The tract at residues 930-1233 (LCFGGQNGVT…HRVNLDGSDG (304 aa)) is malonyl-CoA:ACP transacylase (MAT) domain. Residue Ser1017 is the For acyl/malonyl transferase activity of the active site. Residues 1302 to 1435 (QERAGLLRKL…GSVSLCNERS (134 aa)) are N-terminal hotdog fold. Residues 1302 to 1612 (QERAGLLRKL…FMSVSIRSLT (311 aa)) enclose the PKS/mFAS DH domain. Residues 1307–1611 (LLRKLSDGPE…RFMSVSIRSL (305 aa)) are product template (PT) domain. His1336 serves as the catalytic Proton acceptor; for dehydratase activity. Positions 1461–1612 (ASNGLKGSTV…FMSVSIRSLT (152 aa)) are C-terminal hotdog fold. Asp1518 functions as the Proton donor; for dehydratase activity in the catalytic mechanism. The Carrier domain occupies 1651–1725 (DSDLVAVQEM…GLTEHIFPGH (75 aa)). Ser1685 is subject to O-(pantetheine 4'-phosphoryl)serine. The segment at 1882–2117 (PYALEHDLLQ…GFEWVGWTNN (236 aa)) is methyltransferase (CMeT) domain. Active-site for thioesterase activity residues include Ser2267 and Asp2421.

It localises to the cytoplasm. The protein resides in the cytosol. It catalyses the reaction 3 malonyl-CoA + acetyl-CoA + S-adenosyl-L-methionine + H(+) = 5-methylorsellinate + S-adenosyl-L-homocysteine + 3 CO2 + 4 CoA. It functions in the pathway secondary metabolite biosynthesis; terpenoid biosynthesis. Non-reducing polyketide synthase; part of the gene cluster that mediates the biosynthesis of mycophenolic acid (MPA), the first isolated antibiotic natural product in the world obtained from a culture of Penicillium brevicompactum in 1893. MpaC catalyzes the synthesis of 5-methylorsellinic acid (5MOA) via the condensation of 1 acetyl-CoA starter unit with 3 malonyl-CoA units and one methylation step. The first step of the pathway is the synthesis of 5-methylorsellinic acid (5MOA) by the cytosolic polyketide synthase mpaC. 5MOA is then converted to the phthalide compound 5,7-dihydroxy-4,6-dimethylphthalide (DHMP) by the endoplasmic reticulum-bound cytochrome P450 monooxygenase mpaDE. MpaDE first catalyzes hydroxylation of 5-MOA to 4,6-dihydroxy-2-(hydroxymethyl)-3-methylbenzoic acid (DHMB). MpaDE then acts as a lactone synthase that catalyzes the ring closure to convert DHMB into DHMP. The next step is the prenylation of DHMP by the Golgi apparatus-associated prenyltransferase mpaA to yield farnesyl-DHMP (FDHMP). The ER-bound oxygenase mpaB then mediates the oxidative cleavage the C19-C20 double bond in FDHMP to yield FDHMP-3C via a mycophenolic aldehyde intermediate. The O-methyltransferase mpaG catalyzes the methylation of FDHMP-3C to yield MFDHMP-3C. After the cytosolic methylation of FDHMP-3C, MFDHMP-3C enters into peroxisomes probably via free diffusion due to its low molecular weight. Upon a peroxisomal CoA ligation reaction, catalyzed by a beta-oxidation component enzyme acyl-CoA ligase ACL891, MFDHMP-3C-CoA would then be restricted to peroxisomes for the following beta-oxidation pathway steps. The peroxisomal beta-oxidation machinery than converts MFDHMP-3C-CoA into MPA_CoA, via a beta-oxidation chain-shortening process. Finally mpaH acts as a peroxisomal acyl-CoA hydrolase with high substrate specificity toward MPA-CoA to release the final product MPA. This Penicillium roqueforti (strain FM164) protein is Non-reducing polyketide synthase mapC.